The primary structure comprises 198 residues: Thymidine kinase (198 aa).

ATP-binding positions include 9–16 (GTMNSGKS) and 85–88 (DEAQ). Glu86 (proton acceptor) is an active-site residue. The Zn(2+) site is built by Cys143, Cys146, Cys180, and His183.

It belongs to the thymidine kinase family. As to quaternary structure, homotetramer.

It is found in the cytoplasm. The catalysed reaction is thymidine + ATP = dTMP + ADP + H(+). The chain is Thymidine kinase from Streptococcus thermophilus (strain ATCC BAA-250 / LMG 18311).